The primary structure comprises 1543 residues: Tubby-related protein 4 (1543 aa).

WD repeat units lie at residues 6–72 (EHGP…STPQ), 73–115 (RINF…YEGR), 116–158 (WSVE…SGQR), 159–237 (HWSS…SDDY), 238–276 (APPQ…YDDL), 277–334 (SPTV…GEHI), and 335–372 (FTLD…RVEH). The SOCS box domain maps to 364 to 414 (ALYVVRVEHRVSSLQLLCQQAIASTLREDKDVSKLTLPPRLCSYLSTAFIP). Disordered stretches follow at residues 530–577 (SPKI…SVGS) and 829–850 (TKIN…TAAP). Position 577 is a phosphoserine (S577). Residues R945 and R950 each carry the asymmetric dimethylarginine modification. 3 disordered regions span residues 1004 to 1058 (SPRA…HTAS), 1326 to 1355 (VPQR…AITE), and 1367 to 1453 (DFNS…ASEK). Positions 1036–1050 (TCSQCSGTGPSSQPG) are enriched in polar residues. A compositionally biased stretch (basic and acidic residues) spans 1329 to 1347 (RTEKFGKKNRKRLDSRAEE). Phosphoserine is present on residues S1343 and S1374. Positions 1443–1453 (EEAKCRRASEK) are enriched in basic and acidic residues. Positions 1466 to 1543 (VMANKQPLWN…ALANVTQRLK (78 aa)) are TUB.

Belongs to the TUB family. In terms of tissue distribution, expressed mainly in the brain, skeletal muscle, testis and kidney.

It localises to the cytoplasm. It participates in protein modification; protein ubiquitination. May be a substrate-recognition component of a SCF-like ECS (Elongin-Cullin-SOCS-box protein) E3 ubiquitin ligase complex which mediates the ubiquitination and subsequent proteasomal degradation of target proteins. The chain is Tubby-related protein 4 (TULP4) from Homo sapiens (Human).